We begin with the raw amino-acid sequence, 110 residues long: UPF0060 membrane protein MT2717 (110 aa).

Transmembrane regions (helical) follow at residues 6–26 (ILLF…VWQG), 32–52 (GWLW…FATL), 61–81 (VLAA…MALD), and 90–110 (VIGA…PRGH).

The protein belongs to the UPF0060 family.

It is found in the cell membrane. The chain is UPF0060 membrane protein MT2717 from Mycobacterium tuberculosis (strain CDC 1551 / Oshkosh).